The following is a 157-amino-acid chain: Crossover junction endodeoxyribonuclease RuvC (157 aa).

Residues aspartate 7, glutamate 67, and aspartate 140 contribute to the active site. Mg(2+)-binding residues include aspartate 7, glutamate 67, and aspartate 140.

It belongs to the RuvC family. In terms of assembly, homodimer which binds Holliday junction (HJ) DNA. The HJ becomes 2-fold symmetrical on binding to RuvC with unstacked arms; it has a different conformation from HJ DNA in complex with RuvA. In the full resolvosome a probable DNA-RuvA(4)-RuvB(12)-RuvC(2) complex forms which resolves the HJ. Requires Mg(2+) as cofactor.

The protein localises to the cytoplasm. The enzyme catalyses Endonucleolytic cleavage at a junction such as a reciprocal single-stranded crossover between two homologous DNA duplexes (Holliday junction).. Its function is as follows. The RuvA-RuvB-RuvC complex processes Holliday junction (HJ) DNA during genetic recombination and DNA repair. Endonuclease that resolves HJ intermediates. Cleaves cruciform DNA by making single-stranded nicks across the HJ at symmetrical positions within the homologous arms, yielding a 5'-phosphate and a 3'-hydroxyl group; requires a central core of homology in the junction. The consensus cleavage sequence is 5'-(A/T)TT(C/G)-3'. Cleavage occurs on the 3'-side of the TT dinucleotide at the point of strand exchange. HJ branch migration catalyzed by RuvA-RuvB allows RuvC to scan DNA until it finds its consensus sequence, where it cleaves and resolves the cruciform DNA. In Rickettsia typhi (strain ATCC VR-144 / Wilmington), this protein is Crossover junction endodeoxyribonuclease RuvC.